Reading from the N-terminus, the 136-residue chain is uncharacterized protein (136 aa).

Residues 1-33 (MRDHLPPGLPPDPFADDPCDPSAALEAVEPGQP) form a disordered region.

To M.leprae ML0386.

This is an uncharacterized protein from Mycobacterium tuberculosis (strain CDC 1551 / Oshkosh).